We begin with the raw amino-acid sequence, 204 residues long: HTH-type transcriptional activator BcrR (204 aa).

Residues methionine 1–lysine 81 lie on the Cytoplasmic side of the membrane. Positions leucine 7 to leucine 61 constitute an HTH cro/C1-type domain. The segment at residues glutamine 18–serine 37 is a DNA-binding region (H-T-H motif). A helical transmembrane segment spans residues isoleucine 82 to leucine 102. Residues tyrosine 103 to asparagine 126 are Extracellular-facing. Residues leucine 127–serine 147 traverse the membrane as a helical segment. The Cytoplasmic portion of the chain corresponds to threonine 148 to lysine 154. Residues tryptophan 155–alanine 175 form a helical membrane-spanning segment. Residues alanine 176–tyrosine 181 are Extracellular-facing. A helical transmembrane segment spans residues isoleucine 182–glycine 202. Over methionine 203–lysine 204 the chain is Cytoplasmic.

The protein resides in the cell membrane. Constitutively bound to the bcrABD promoter. Requires bacitracin for activation, probably through a conformational change, such as the oligomerization of inactive dimers to form active tetramers. In terms of biological role, functions both as a membrane-bound sensor and a transducer of bacitracin availability to activate transcription of the bcrABD operon in the presence of bacitracin. Binds specifically to two inverted repeat sequences on the bcrABD promoter, irrespective of bacitracin concentration. This chain is HTH-type transcriptional activator BcrR, found in Enterococcus faecalis (Streptococcus faecalis).